Reading from the N-terminus, the 350-residue chain is Nicotinate-nucleotide--dimethylbenzimidazole phosphoribosyltransferase (350 aa).

Glu-318 functions as the Proton acceptor in the catalytic mechanism.

This sequence belongs to the CobT family.

It catalyses the reaction 5,6-dimethylbenzimidazole + nicotinate beta-D-ribonucleotide = alpha-ribazole 5'-phosphate + nicotinate + H(+). Its pathway is nucleoside biosynthesis; alpha-ribazole biosynthesis; alpha-ribazole from 5,6-dimethylbenzimidazole: step 1/2. In terms of biological role, catalyzes the synthesis of alpha-ribazole-5'-phosphate from nicotinate mononucleotide (NAMN) and 5,6-dimethylbenzimidazole (DMB). This Citrifermentans bemidjiense (strain ATCC BAA-1014 / DSM 16622 / JCM 12645 / Bem) (Geobacter bemidjiensis) protein is Nicotinate-nucleotide--dimethylbenzimidazole phosphoribosyltransferase.